The following is a 281-amino-acid chain: Putative phosphatase/phosphodiesterase MG246 (281 aa).

The Fe cation site is built by Asp-11, Glu-42, Asn-43, and Asn-70. His-71 functions as the Proton donor in the catalytic mechanism. Positions 157, 182, and 184 each coordinate Fe cation.

This sequence belongs to the YmdB-like family. Fe(3+) is required as a cofactor.

This chain is Putative phosphatase/phosphodiesterase MG246, found in Mycoplasma genitalium (strain ATCC 33530 / DSM 19775 / NCTC 10195 / G37) (Mycoplasmoides genitalium).